The sequence spans 329 residues: MIRIAIDAMGGDFGPEPIIEGVVQALEEKTFQPILVGDKEEILSLLPQYYIDKVEIVEATDVIDMSDQATNALKRKDSSIYKAVELVRNKEADAVLSAGHSGATMTLATLRMGRLPHISKPALATLMPSLGKNKTLVLDVGAVTDCTPQNLYEFGAMGEAYVEKILNIRNPRVGLLSNGSEDSKGNALTKEAFVLLKNLRGFVGNVEGKDIFNGKVDVVVCDGFTGNIMLKASEGVVTTVFELMKQYIRKSLPAKIGALMMRKKVFANMKRQVDKDEYGGAPLLGVDGCAIVSHGASNAKAIKNAIFQAILFTESGVNSQIEELLSEKE.

The protein belongs to the PlsX family. Homodimer. Probably interacts with PlsY.

The protein resides in the cytoplasm. The enzyme catalyses a fatty acyl-[ACP] + phosphate = an acyl phosphate + holo-[ACP]. Its pathway is lipid metabolism; phospholipid metabolism. Its function is as follows. Catalyzes the reversible formation of acyl-phosphate (acyl-PO(4)) from acyl-[acyl-carrier-protein] (acyl-ACP). This enzyme utilizes acyl-ACP as fatty acyl donor, but not acyl-CoA. This Sulfurovum sp. (strain NBC37-1) protein is Phosphate acyltransferase.